The following is a 545-amino-acid chain: ATP synthase subunit alpha (545 aa).

Position 173–180 (173–180 (GDRQTGKS)) interacts with ATP.

This sequence belongs to the ATPase alpha/beta chains family. In terms of assembly, F-type ATPases have 2 components, CF(1) - the catalytic core - and CF(0) - the membrane proton channel. CF(1) has five subunits: alpha(3), beta(3), gamma(1), delta(1), epsilon(1). CF(0) has three main subunits: a(1), b(2) and c(9-12). The alpha and beta chains form an alternating ring which encloses part of the gamma chain. CF(1) is attached to CF(0) by a central stalk formed by the gamma and epsilon chains, while a peripheral stalk is formed by the delta and b chains.

The protein resides in the cell membrane. The catalysed reaction is ATP + H2O + 4 H(+)(in) = ADP + phosphate + 5 H(+)(out). Its function is as follows. Produces ATP from ADP in the presence of a proton gradient across the membrane. The alpha chain is a regulatory subunit. The polypeptide is ATP synthase subunit alpha (Arthrobacter sp. (strain FB24)).